The sequence spans 623 residues: Lamin-B2.L (623 aa).

A compositionally biased stretch (low complexity) spans 1 to 18 (MATTTPSRSTRSSMQSPA). The disordered stretch occupies residues 1-30 (MATTTPSRSTRSSMQSPARGTSTPLSPTRI). The segment at 2 to 27 (ATTTPSRSTRSSMQSPARGTSTPLSP) is head. Residues 19–30 (RGTSTPLSPTRI) are compositionally biased toward polar residues. Ser-26 bears the Phosphoserine mark. The interval 28–64 (TRISRLQEKEELRHLNDRLAVYIDRVRALELENDRLM) is coil 1A. The region spanning 35–391 (EKEELRHLND…KLLEGEEERL (357 aa)) is the IF rod domain. A linker 1 region spans residues 64–74 (MVKISEKEEVT). The interval 75 to 211 (TREVSGIKNL…QSLQEEMDFR (137 aa)) is coil 1B. The segment at 212-235 (KNIYEEESRETRKRHERRIVEVDR) is linker 2. Residues 236–378 (GHHYDYESKL…VKLALDLEIN (143 aa)) form a coil 2 region. The tract at residues 380-592 (YRKLLEGEEE…VTKSVLRNVE (213 aa)) is tail. Disordered regions lie at residues 388–473 (EERL…LSQQ) and 591–623 (VEEE…CSVM). Ser-396 carries the phosphoserine modification. The segment covering 398–416 (ESRVTVSRATSSSSSATRT) has biased composition (low complexity). Positions 420–425 (KRRRVE) match the Nuclear localization signal motif. Residues 443–473 (LGSSRITASEGSSRTITSGQSSTTRFHLSQQ) are compositionally biased toward polar residues. One can recognise an LTD domain in the interval 468 to 585 (FHLSQQASAT…EEVAVRTVTK (118 aa)). A compositionally biased stretch (acidic residues) spans 592–604 (EEEEDEDADFGEE). The segment covering 612–623 (DPRTTSRGCSVM) has biased composition (polar residues). Position 620 is a cysteine methyl ester (Cys-620). Cys-620 is lipidated: S-farnesyl cysteine. The propeptide at 621–623 (SVM) is removed in mature form.

This sequence belongs to the intermediate filament family. In terms of processing, phosphorylation plays a key role in lamin organization, subcellular localization and nuclear envelope disintegration. Phosphorylation by CDK1 at Ser-26 at the onset of mitosis drives lamin disassembly and nuclear envelope breakdown.

The protein resides in the nucleus lamina. The protein localises to the nucleus envelope. It localises to the nucleus. Its subcellular location is the nucleoplasm. It is found in the nucleus matrix. Its function is as follows. Lamins are intermediate filament proteins that assemble into a filamentous meshwork, and which constitute the major components of the nuclear lamina, a fibrous layer on the nucleoplasmic side of the inner nuclear membrane. Lamins provide a framework for the nuclear envelope, bridging the nuclear envelope and chromatin, thereby playing an important role in nuclear assembly, chromatin organization, nuclear membrane and telomere dynamics. The structural integrity of the lamina is strictly controlled by the cell cycle, as seen by the disintegration and formation of the nuclear envelope in prophase and telophase, respectively. In Xenopus laevis (African clawed frog), this protein is Lamin-B2.L (lmnb2.L).